The chain runs to 447 residues: UDP-glycosyltransferase 79B10 (447 aa).

UDP-alpha-D-glucose is bound by residues Ser-260, 319-321 (VQQ), 336-344 (HCGFGSMWE), and 358-361 (LADQ).

The protein belongs to the UDP-glycosyltransferase family.

This Arabidopsis thaliana (Mouse-ear cress) protein is UDP-glycosyltransferase 79B10 (UGT79B10).